A 786-amino-acid polypeptide reads, in one-letter code: Neprilysin-3 (786 aa).

Over 1–52 the chain is Cytoplasmic; that stretch reads MTRYKQTEFTEDDSSSIGGIQLNEATGHTGMQIRYHTARATWNWRSRNKTEK. Residues 53–73 traverse the membrane as a helical; Signal-anchor for type II membrane protein segment; the sequence is WLLITTFVMAITIFTLLIVLF. Topologically, residues 74–786 are extracellular; the sequence is TDGGSSDATK…MNPTEKCEVW (713 aa). Positions 102 to 786 constitute a Peptidase M13 domain; sequence PCLNKHCIFA…MNPTEKCEVW (685 aa). 5 disulfide bridges follow: Cys103–Cys108, Cys126–Cys771, Cys134–Cys731, Cys190–Cys450, and Cys659–Cys783. N-linked (GlcNAc...) asparagine glycans are attached at residues Asn216, Asn226, Asn256, Asn279, Asn305, Asn325, Asn356, Asn388, Asn496, and Asn569. His622 serves as a coordination point for Zn(2+). Glu623 is a catalytic residue. Zn(2+) is bound by residues His626 and Glu682. Residue Asp686 is the Proton donor of the active site. Residue Asn715 is glycosylated (N-linked (GlcNAc...) asparagine).

The protein belongs to the peptidase M13 family. It depends on Zn(2+) as a cofactor.

It is found in the cell membrane. The enzyme catalyses Preferential cleavage of polypeptides between hydrophobic residues, particularly with Phe or Tyr at P1'.. Its function is as follows. Metalloendoprotease which is required in the dorsal paired medial neurons for the proper formation of long-term (LTM) and middle-term memories (MTM). Also required in the mushroom body neurons where it functions redundantly with neprilysins Nep2 and Nep4 in normal LTM formation. The polypeptide is Neprilysin-3 (Drosophila melanogaster (Fruit fly)).